The primary structure comprises 296 residues: MRLLTCLINVLAGLTLFSQFQRAFGLTITRRGFKVQESDEEPFCALHHPNTGEYFDLSGLIRDNTSEKGDYSVNGYDFGTNFSINLCHPVVSNLTNYTVEGDVSSEDSIGGFFTVEDDDLYSIGQAAYKPYFRGKKLIMQLDNGSLCPKSNHIRMSTLISFTCNRDPYTAPSVITYVGNLNDCAFFFEWKTIHACPTVKKDSTLNPVSVFLLFCAIAFLAYFVGGFVYQRVVLNARGLRQIPNYEMWRSLFGFISDIVIILYSSILSILPSSITRMRGNRRNIDYVEDALIDDIDT.

An N-terminal signal peptide occupies residues 1-25 (MRLLTCLINVLAGLTLFSQFQRAFG). Residues 26-206 (LTITRRGFKV…TVKKDSTLNP (181 aa)) are Lumenal-facing. The MRH domain occupies 42-197 (PFCALHHPNT…EWKTIHACPT (156 aa)). A disulfide bridge connects residues Cys-44 and Cys-87. Asn-64, Asn-81, Asn-93, Asn-96, and Asn-143 each carry an N-linked (GlcNAc...) asparagine glycan. 2 disulfide bridges follow: Cys-147–Cys-183 and Cys-163–Cys-195. A helical membrane pass occupies residues 207 to 227 (VSVFLLFCAIAFLAYFVGGFV). Topologically, residues 228 to 249 (YQRVVLNARGLRQIPNYEMWRS) are cytoplasmic. Residues 250 to 270 (LFGFISDIVIILYSSILSILP) traverse the membrane as a helical segment. Residues 271–296 (SSITRMRGNRRNIDYVEDALIDDIDT) lie on the Lumenal side of the membrane.

It belongs to the MRL1/IGF2R family.

It is found in the golgi apparatus. Its subcellular location is the trans-Golgi network membrane. The protein resides in the endosome membrane. The polypeptide is Putative mannose 6-phosphate receptor-like protein C530.09c (Schizosaccharomyces pombe (strain 972 / ATCC 24843) (Fission yeast)).